We begin with the raw amino-acid sequence, 438 residues long: Xylose isomerase (438 aa).

Residues histidine 103 and aspartate 106 contribute to the active site. Glutamate 234, glutamate 270, histidine 273, aspartate 298, aspartate 309, aspartate 311, and aspartate 341 together coordinate Mg(2+).

The protein belongs to the xylose isomerase family. Homotetramer. Requires Mg(2+) as cofactor.

The protein resides in the cytoplasm. It catalyses the reaction alpha-D-xylose = alpha-D-xylulofuranose. This is Xylose isomerase from Bacteroides thetaiotaomicron (strain ATCC 29148 / DSM 2079 / JCM 5827 / CCUG 10774 / NCTC 10582 / VPI-5482 / E50).